The chain runs to 188 residues: V-type proton ATPase subunit E (188 aa).

The protein belongs to the V-ATPase E subunit family.

In terms of biological role, produces ATP from ADP in the presence of a proton gradient across the membrane. This Dictyoglomus turgidum (strain DSM 6724 / Z-1310) protein is V-type proton ATPase subunit E.